The following is a 989-amino-acid chain: Bifunctional glutamine synthetase adenylyltransferase/adenylyl-removing enzyme (989 aa).

The interval 1–473 is adenylyl removase; that stretch reads MRGPLEPDSA…HYANLFEDVA (473 aa). Residues 479–989 form an adenylyl transferase region; that stretch reads DADLMFPPDE…FERILETAAE (511 aa).

This sequence belongs to the GlnE family. Requires Mg(2+) as cofactor.

The enzyme catalyses [glutamine synthetase]-O(4)-(5'-adenylyl)-L-tyrosine + phosphate = [glutamine synthetase]-L-tyrosine + ADP. It carries out the reaction [glutamine synthetase]-L-tyrosine + ATP = [glutamine synthetase]-O(4)-(5'-adenylyl)-L-tyrosine + diphosphate. Involved in the regulation of glutamine synthetase GlnA, a key enzyme in the process to assimilate ammonia. When cellular nitrogen levels are high, the C-terminal adenylyl transferase (AT) inactivates GlnA by covalent transfer of an adenylyl group from ATP to specific tyrosine residue of GlnA, thus reducing its activity. Conversely, when nitrogen levels are low, the N-terminal adenylyl removase (AR) activates GlnA by removing the adenylyl group by phosphorolysis, increasing its activity. The regulatory region of GlnE binds the signal transduction protein PII (GlnB) which indicates the nitrogen status of the cell. This Xanthobacter autotrophicus (strain ATCC BAA-1158 / Py2) protein is Bifunctional glutamine synthetase adenylyltransferase/adenylyl-removing enzyme.